The primary structure comprises 356 residues: Tyrosine recombinase XerS (356 aa).

The Core-binding (CB) domain maps to 16-121 (IMPWYVLEYY…ALSSLYKYLT (106 aa)). The Tyr recombinase domain occupies 169–354 (GFLTYIDQEY…VNDEQKNALD (186 aa)). Active-site residues include R210, K234, H306, R309, and H332. The active-site O-(3'-phospho-DNA)-tyrosine intermediate is the Y341.

Belongs to the 'phage' integrase family. XerS subfamily.

It localises to the cytoplasm. FtsK is required for recombination. Functionally, site-specific tyrosine recombinase, which acts by catalyzing the cutting and rejoining of the recombining DNA molecules. Essential to convert dimers of the bacterial chromosome into monomers to permit their segregation at cell division. The protein is Tyrosine recombinase XerS of Streptococcus pneumoniae (strain Hungary19A-6).